The primary structure comprises 247 residues: Probable transcriptional regulatory protein PBPRA1113 (247 aa).

Belongs to the TACO1 family.

The protein resides in the cytoplasm. This chain is Probable transcriptional regulatory protein PBPRA1113, found in Photobacterium profundum (strain SS9).